The following is a 384-amino-acid chain: S-adenosylmethionine synthase (384 aa).

His15 is an ATP binding site. Asp17 provides a ligand contact to Mg(2+). Glu43 provides a ligand contact to K(+). Residues Glu56 and Gln99 each contribute to the L-methionine site. Residues 99-109 form a flexible loop region; sequence QSPDINQGVDK. Residues 164 to 166, 230 to 231, Asp239, 245 to 246, Ala262, and Lys266 each bind ATP; these read DAK, RF, and RK. Asp239 is a binding site for L-methionine. L-methionine is bound at residue Lys270.

The protein belongs to the AdoMet synthase family. In terms of assembly, homotetramer; dimer of dimers. It depends on Mg(2+) as a cofactor. K(+) is required as a cofactor.

Its subcellular location is the cytoplasm. It carries out the reaction L-methionine + ATP + H2O = S-adenosyl-L-methionine + phosphate + diphosphate. It functions in the pathway amino-acid biosynthesis; S-adenosyl-L-methionine biosynthesis; S-adenosyl-L-methionine from L-methionine: step 1/1. In terms of biological role, catalyzes the formation of S-adenosylmethionine (AdoMet) from methionine and ATP. The overall synthetic reaction is composed of two sequential steps, AdoMet formation and the subsequent tripolyphosphate hydrolysis which occurs prior to release of AdoMet from the enzyme. The protein is S-adenosylmethionine synthase of Aliivibrio fischeri (strain ATCC 700601 / ES114) (Vibrio fischeri).